A 77-amino-acid chain; its full sequence is Large ribosomal subunit protein eL20 (77 aa).

Belongs to the eukaryotic ribosomal protein eL20 family. Part of the 50S ribosomal subunit. Binds 23S rRNA.

The chain is Large ribosomal subunit protein eL20 from Thermococcus kodakarensis (strain ATCC BAA-918 / JCM 12380 / KOD1) (Pyrococcus kodakaraensis (strain KOD1)).